The chain runs to 719 residues: Exonuclease mut-7 homolog (719 aa).

Residues 1 to 22 (MSKSNNVAPPCRQDQLGFVPAG) form a disordered region. Residues 575–629 (NLANLVRLCLGKKLDKSNQFSNWAQRPLRKEQLRYAALDAFCLLEIYDAIEKQLT) enclose the 3'-5' exonuclease domain. The tract at residues 644–719 (NDVRPPSDSG…FEGPNTKSVL (76 aa)) is disordered. The segment covering 667 to 678 (RRNHRDKYNKRH) has biased composition (basic residues). 2 stretches are compositionally biased toward polar residues: residues 683–692 (DSNSGNSSRA) and 706–719 (EQQT…KSVL).

The protein belongs to the mut-7 family. Mg(2+) serves as cofactor.

Its function is as follows. Possesses 3'-5' exoribonuclease activity. Required for 3'-end trimming of AGO1-bound miRNAs. The polypeptide is Exonuclease mut-7 homolog (Aedes aegypti (Yellowfever mosquito)).